The chain runs to 470 residues: GTPase Der (470 aa).

EngA-type G domains lie at 32–195 and 206–379; these read PVVA…PTIS and RRVA…KSWD. GTP-binding positions include 38 to 45, 85 to 89, 147 to 150, 212 to 219, 259 to 263, and 324 to 327; these read GRPNVGKS, DTGGW, NKVD, GKPNVGKS, DTAGL, and NKWD. A KH-like domain is found at 380–462; it reads TRVSTGRLNT…PIRINVRVRE (83 aa).

Belongs to the TRAFAC class TrmE-Era-EngA-EngB-Septin-like GTPase superfamily. EngA (Der) GTPase family. In terms of assembly, associates with the 50S ribosomal subunit.

GTPase that plays an essential role in the late steps of ribosome biogenesis. The polypeptide is GTPase Der (Mycolicibacterium vanbaalenii (strain DSM 7251 / JCM 13017 / BCRC 16820 / KCTC 9966 / NRRL B-24157 / PYR-1) (Mycobacterium vanbaalenii)).